The sequence spans 369 residues: S-adenosylmethionine:tRNA ribosyltransferase-isomerase (369 aa).

It belongs to the QueA family. In terms of assembly, monomer.

The protein resides in the cytoplasm. It catalyses the reaction 7-aminomethyl-7-carbaguanosine(34) in tRNA + S-adenosyl-L-methionine = epoxyqueuosine(34) in tRNA + adenine + L-methionine + 2 H(+). It participates in tRNA modification; tRNA-queuosine biosynthesis. Its function is as follows. Transfers and isomerizes the ribose moiety from AdoMet to the 7-aminomethyl group of 7-deazaguanine (preQ1-tRNA) to give epoxyqueuosine (oQ-tRNA). This chain is S-adenosylmethionine:tRNA ribosyltransferase-isomerase, found in Acaryochloris marina (strain MBIC 11017).